Consider the following 520-residue polypeptide: Diacylglycerol O-acyltransferase 1 (520 aa).

2 disordered regions span residues 28-57 (RRKS…GAPA) and 72-116 (QGTA…AHRR). Over residues 34–54 (DSSNGLLLSGSDNNSPSDDVG) the composition is skewed to low complexity. Gly residues predominate over residues 81 to 98 (NNGGGDNNGGGRGGGEGR). The next 7 membrane-spanning stretches (helical) occupy residues 126 to 146 (AIFK…LIAV), 176 to 196 (WPLF…FTVE), 207 to 227 (PVVI…PVYV), 233 to 253 (SAFL…LKLV), 276 to 296 (VSYY…TLCY), 317 to 337 (KLVI…NPIV), and 365 to 385 (VWLC…AELL). The short motif at 392-398 (FYKDWWN) is the FYXDWWN motif element. 3 consecutive transmembrane segments (helical) span residues 434–454 (LAII…IAVP), 457–477 (LFKL…FITN), and 487–507 (VGNM…CVLL). H447 is an active-site residue.

Belongs to the membrane-bound acyltransferase family. Sterol o-acyltransferase subfamily. In terms of assembly, interacts with LPCAT2 and LPAT2. In terms of tissue distribution, ubiquitous. Highest expression in young developing seeds.

Its subcellular location is the plastid. The protein resides in the chloroplast membrane. It localises to the endoplasmic reticulum membrane. The catalysed reaction is an acyl-CoA + a 1,2-diacyl-sn-glycerol = a triacyl-sn-glycerol + CoA. It carries out the reaction 1,2-di-(9Z-octadecenoyl)-sn-glycerol + (9Z)-octadecenoyl-CoA = 1,2,3-tri-(9Z-octadecenoyl)-glycerol + CoA. The protein operates within glycerolipid metabolism; triacylglycerol biosynthesis. Partially inhibited by niacin. Its function is as follows. Major contributor to triacylglycerol (TAG) synthesis and oil accumulation in seeds. Catalyzes the acylation of the sn-3 hydroxy group of sn-1,2-diacylglycerol using acyl-CoA. Can use palmitoyl-CoA and oleoyl-CoA as substrates. Can use oleoyl-CoA and linoleoyl-CoA as substrates. Has substrate preference for oleoyl-CoA compared to linoleoyl-CoA. Has complementary functions with PDAT1 that are essential for triacylglycerol synthesis and normal development of both seeds and pollen. This is Diacylglycerol O-acyltransferase 1 from Arabidopsis thaliana (Mouse-ear cress).